Consider the following 239-residue polypeptide: 4-hydroxy-tetrahydrodipicolinate reductase (239 aa).

NAD(+) is bound by residues 8–13 (GSTGKM), 78–80 (GTT), and 102–105 (SANM). H134 serves as the catalytic Proton donor/acceptor. H135 provides a ligand contact to (S)-2,3,4,5-tetrahydrodipicolinate. Residue K138 is the Proton donor of the active site. 144-145 (GT) is a binding site for (S)-2,3,4,5-tetrahydrodipicolinate.

It belongs to the DapB family.

Its subcellular location is the cytoplasm. The enzyme catalyses (S)-2,3,4,5-tetrahydrodipicolinate + NAD(+) + H2O = (2S,4S)-4-hydroxy-2,3,4,5-tetrahydrodipicolinate + NADH + H(+). The catalysed reaction is (S)-2,3,4,5-tetrahydrodipicolinate + NADP(+) + H2O = (2S,4S)-4-hydroxy-2,3,4,5-tetrahydrodipicolinate + NADPH + H(+). It participates in amino-acid biosynthesis; L-lysine biosynthesis via DAP pathway; (S)-tetrahydrodipicolinate from L-aspartate: step 4/4. In terms of biological role, catalyzes the conversion of 4-hydroxy-tetrahydrodipicolinate (HTPA) to tetrahydrodipicolinate. The chain is 4-hydroxy-tetrahydrodipicolinate reductase from Rickettsia africae (strain ESF-5).